Here is a 147-residue protein sequence, read N- to C-terminus: Phage-like element PBSX protein XkdM (147 aa).

This sequence to B.subtilis YqbM.

The protein is Phage-like element PBSX protein XkdM (xkdM) of Bacillus subtilis (strain 168).